Consider the following 432-residue polypeptide: Sonic hedgehog protein (432 aa).

The first 26 residues, 1 to 26 (MDEMILLRRVLLAGFICALLVPSGLS), serve as a signal peptide directing secretion. Residue Cys27 is the site of N-palmitoyl cysteine attachment. The Cardin-Weintraub motif lies at 35–41 (TRKRFKK). The Ca(2+) site is built by Glu92, Glu93, Asp98, Thr128, Glu129, Asp132, and Asp134. Zn(2+) contacts are provided by His143, Asp150, and His185. A lipid anchor (Cholesterol glycine ester) is attached at Gly200.

This sequence belongs to the hedgehog family. As to quaternary structure, interacts with HHATL/GUP1 which negatively regulates HHAT-mediated palmitoylation of the SHH N-terminus. Interacts with BOC and CDON. Interacts with HHIP. Interacts with DISP1 via its cholesterol anchor. Interacts with SCUBE2. Multimer. The C-terminal domain displays an autoproteolysis activity and a cholesterol transferase activity. Both activities result in the cleavage of the full-length protein and covalent attachment of a cholesterol moiety to the C-terminal of the newly generated N-terminal fragment (ShhN). Cholesterylation is required for the sonic hedgehog protein N-product targeting to lipid rafts and multimerization. ShhN is the active species in both local and long-range signaling, whereas the C-product (ShhC) is degraded in the reticulum endoplasmic. In terms of processing, N-palmitoylation by HHAT of ShhN is required for sonic hedgehog protein N-product multimerization and full activity. It is a prerequisite for the membrane-proximal positioning and the subsequent shedding of this N-terminal peptide. Post-translationally, the lipidated N- and C-terminal peptides of ShhNp can be cleaved (shedding). The N-terminal palmitoylated peptide is cleaved at the Cardin-Weintraub (CW) motif site. The cleavage reduced the interactions with heparan sulfate. The cleavage is enhanced by SCUBE2.

The protein localises to the endoplasmic reticulum membrane. It is found in the golgi apparatus membrane. The protein resides in the cell membrane. It catalyses the reaction glycyl-L-cysteinyl-[protein] + cholesterol + H(+) = [protein]-C-terminal glycyl cholesterol ester + N-terminal L-cysteinyl-[protein]. Its function is as follows. The C-terminal part of the sonic hedgehog protein precursor displays an autoproteolysis and a cholesterol transferase activity. Both activities result in the cleavage of the full-length protein into two parts (ShhN and ShhC) followed by the covalent attachment of a cholesterol moiety to the C-terminal of the newly generated ShhN. Both activities occur in the endoplasmic reticulum. Once cleaved, ShhC is degraded in the endoplasmic reticulum. In terms of biological role, the dually lipidated sonic hedgehog protein N-product (ShhNp) is a morphogen which is essential for a variety of patterning events during development. Induces ventral cell fate in the neural tube and somites. Involved in the patterning of the anterior-posterior axis of the developing limb bud. Essential for axon guidance. Binds to the patched (PTCH1) receptor, which functions in association with smoothened (SMO), to activate the transcription of target genes. In the absence of SHH, PTCH1 represses the constitutive signaling activity of SMO. The chain is Sonic hedgehog protein from Cynops pyrrhogaster (Japanese fire-bellied newt).